The chain runs to 73 residues: Putative membrane protein insertion efficiency factor (73 aa).

This sequence belongs to the UPF0161 family.

Its subcellular location is the cell inner membrane. Functionally, could be involved in insertion of integral membrane proteins into the membrane. The sequence is that of Putative membrane protein insertion efficiency factor from Bacteroides fragilis (strain ATCC 25285 / DSM 2151 / CCUG 4856 / JCM 11019 / LMG 10263 / NCTC 9343 / Onslow / VPI 2553 / EN-2).